A 324-amino-acid chain; its full sequence is tRNA N6-adenosine threonylcarbamoyltransferase (324 aa).

The Fe cation site is built by His107, His111, and Tyr127. Substrate is bound by residues Tyr127–Gly131, Asp159, Gly172, Glu176, and Asn257. Asp285 contributes to the Fe cation binding site.

This sequence belongs to the KAE1 / TsaD family. As to quaternary structure, monomer. Component of the KEOPS complex that consists of Kae1, Bud32, Cgi121 and Pcc1; the whole complex dimerizes. Requires Fe(2+) as cofactor.

Its subcellular location is the cytoplasm. It carries out the reaction L-threonylcarbamoyladenylate + adenosine(37) in tRNA = N(6)-L-threonylcarbamoyladenosine(37) in tRNA + AMP + H(+). In terms of biological role, required for the formation of a threonylcarbamoyl group on adenosine at position 37 (t(6)A37) in tRNAs that read codons beginning with adenine. Is a component of the KEOPS complex that is probably involved in the transfer of the threonylcarbamoyl moiety of threonylcarbamoyl-AMP (TC-AMP) to the N6 group of A37. Kae1 likely plays a direct catalytic role in this reaction, but requires other protein(s) of the complex to fulfill this activity. The sequence is that of tRNA N6-adenosine threonylcarbamoyltransferase from Thermococcus sibiricus (strain DSM 12597 / MM 739).